Consider the following 429-residue polypeptide: 3-phosphoshikimate 1-carboxyvinyltransferase (429 aa).

Residues Lys25, Ser26, and Arg30 each coordinate 3-phosphoshikimate. Residue Lys25 participates in phosphoenolpyruvate binding. Phosphoenolpyruvate-binding residues include Gly99 and Arg127. 3-phosphoshikimate contacts are provided by Ser173, Ser174, Gln175, Ser201, Asp317, Asn340, and Lys344. Gln175 contacts phosphoenolpyruvate. Asp317 functions as the Proton acceptor in the catalytic mechanism. Phosphoenolpyruvate is bound by residues Arg348, Arg390, and Lys415.

Belongs to the EPSP synthase family. Monomer.

The protein resides in the cytoplasm. It catalyses the reaction 3-phosphoshikimate + phosphoenolpyruvate = 5-O-(1-carboxyvinyl)-3-phosphoshikimate + phosphate. Its pathway is metabolic intermediate biosynthesis; chorismate biosynthesis; chorismate from D-erythrose 4-phosphate and phosphoenolpyruvate: step 6/7. Catalyzes the transfer of the enolpyruvyl moiety of phosphoenolpyruvate (PEP) to the 5-hydroxyl of shikimate-3-phosphate (S3P) to produce enolpyruvyl shikimate-3-phosphate and inorganic phosphate. This chain is 3-phosphoshikimate 1-carboxyvinyltransferase, found in Pseudoalteromonas atlantica (strain T6c / ATCC BAA-1087).